A 205-amino-acid chain; its full sequence is Rho-related protein racI (205 aa).

GTP is bound at residue 12–19 (GDSKTGKT). Positions 34–42 (YVPSHVDAT) match the Effector region motif. Residues 59–63 (DSSAL) and 119–122 (TKCD) each bind GTP. Cysteine methyl ester is present on Cys-202. The S-geranylgeranyl cysteine moiety is linked to residue Cys-202. Positions 203–205 (IIQ) are cleaved as a propeptide — removed in mature form.

It belongs to the small GTPase superfamily. Rho family.

Its subcellular location is the cell membrane. This Dictyostelium discoideum (Social amoeba) protein is Rho-related protein racI (racI).